The sequence spans 843 residues: General transcription and DNA repair factor IIH helicase/translocase subunit XPB/SSL2 (843 aa).

The interval 1 to 85 (MTDVEGYQPK…TAADSSMNQM (85 aa)) is disordered. The span at 26-41 (SDEDSPATDAEIDENY) shows a compositional bias: acidic residues. Residues 42–56 (DDNRETSEGRGERDT) are compositionally biased toward basic and acidic residues. Residues 64-74 (KKPRKKTKSSR) show a composition bias toward basic residues. The Nuclear localization signal motif lies at 64–75 (KKPRKKTKSSRH). Residues 373–535 (MFGNGRARSG…DLNFLIGPKL (163 aa)) form the Helicase ATP-binding domain. Position 386-393 (386-393 (LPCGAGKT)) interacts with ATP. The DEAH box motif lies at 488–491 (DEVH). One can recognise a Helicase C-terminal domain in the interval 589-743 (QACQFLIQYH…KVITHLHGME (155 aa)). Ser752 carries the phosphoserine modification.

Belongs to the helicase family. RAD25/XPB subfamily. Component of the 7-subunit TFIIH core complex composed of XPB/SSL2, XPD/RAD3, SSL1, TFB1, TFB2, TFB4 and TFB5, which is active in NER. The core complex associates with the 3-subunit CTD-kinase module TFIIK composed of CCL1, KIN28 and TFB3 to form the 10-subunit holoenzyme (holo-TFIIH) active in transcription. An additionnal subunit, TFB6, plays a role in the dissociation of the SSL2 helicase from TFIIH after transcription initiation. Interacts directly with TFB6. Mg(2+) is required as a cofactor.

It localises to the nucleus. The enzyme catalyses Couples ATP hydrolysis with the unwinding of duplex DNA by translocating in the 3'-5' direction.. It carries out the reaction ATP + H2O = ADP + phosphate + H(+). In terms of biological role, ATP-dependent DNA translocase. Component of the general transcription and DNA repair factor IIH (TFIIH) core complex. When complexed to CDK-activating kinase (CAK), involved in RNA transcription by RNA polymerase II. May have 3'-5' helicase activity alone, the TFIIH core however has no 3'-5' helicase activity. Also involved in transcription-coupled nucleotide excision repair (NER) of damaged DNA. In NER, TFIIH acts by opening DNA around the lesion to allow the excision of the damaged oligonucleotide and its replacement by a new DNA fragment. The ATPase activity of XPB/SSL2, but not its helicase activity, is required for DNA opening. In transcription, TFIIH has an essential role in transcription initiation. When the pre-initiation complex (PIC) has been established, TFIIH is required for promoter opening and promoter escape. The ATP-dependent helicase activity of XPB/SSL2 is required for promoter opening and promoter escape. XPB/SSL2 acts as a double-stranded DNA translocase, promoting DNA opening by tracking in a 5'-3' dirction along the nontemplate promoter strand, rotating and inserting DNA into the Pol II active site cleft, leading to DNA unwinding. A dsDNA-stimulated ATPase, dATP and ATP are equally good substrates. May also use this translocase mechanism during DNA repair rather than physically wedging open damaged DNA. The polypeptide is General transcription and DNA repair factor IIH helicase/translocase subunit XPB/SSL2 (Saccharomyces cerevisiae (strain ATCC 204508 / S288c) (Baker's yeast)).